The sequence spans 284 residues: Acetylglutamate kinase (284 aa).

Residues 66–67, arginine 88, and asparagine 179 each bind substrate; that span reads GG.

Belongs to the acetylglutamate kinase family. ArgB subfamily.

The protein resides in the cytoplasm. It carries out the reaction N-acetyl-L-glutamate + ATP = N-acetyl-L-glutamyl 5-phosphate + ADP. It participates in amino-acid biosynthesis; L-arginine biosynthesis; N(2)-acetyl-L-ornithine from L-glutamate: step 2/4. Its function is as follows. Catalyzes the ATP-dependent phosphorylation of N-acetyl-L-glutamate. This Actinobacillus pleuropneumoniae serotype 5b (strain L20) protein is Acetylglutamate kinase.